Consider the following 927-residue polypeptide: Nonsense-mediated mRNA decay factor SMG8 (927 aa).

Disordered stretches follow at residues 543-581, 611-636, and 643-662; these read NTGK…NTAS, QARS…DTEN, and QEPA…AVST. Acidic residues predominate over residues 551-566; sequence QDEDAGEDEAEEEEGQ. The segment covering 613–633 has biased composition (polar residues); that stretch reads RSEQLSNSEQNTTRSGSSSVD. Over residues 644 to 654 the composition is skewed to basic and acidic residues; the sequence is EPAKKEAREDV.

Belongs to the SMG8 family.

Involved in nonsense-mediated decay (NMD) of mRNAs containing premature stop codons. Probable component of kinase complex containing nonC and recruited to stalled ribosomes. The sequence is that of Nonsense-mediated mRNA decay factor SMG8 from Drosophila sechellia (Fruit fly).